Reading from the N-terminus, the 274-residue chain is Kit ligand (274 aa).

The N-terminal stretch at 1–25 is a signal peptide; sequence MKKTQTWIITCIYLQLLLFNPLVHT. Position 26 is a pyrrolidone carboxylic acid (Q26). Topologically, residues 26–215 are extracellular; it reads QGICSNRVTD…SNSIEDSSLQ (190 aa). Disulfide bonds link C29–C114 and C68–C164. Residues N90, N145, and N196 are each glycosylated (N-linked (GlcNAc...) asparagine). A helical membrane pass occupies residues 216–238; sequence WAAVALPAFFSLVIGFAFGAFYW. At 239 to 274 the chain is on the cytoplasmic side; the sequence is KKKQPNLTRTVENRQINEEDNEISMLQEKEREFQEV.

Belongs to the SCF family. As to quaternary structure, homodimer, non-covalently linked. Post-translationally, a soluble form is produced by proteolytic processing of isoform 1 in the extracellular domain.

The protein resides in the cell membrane. Its subcellular location is the cytoplasm. The protein localises to the cytoskeleton. It localises to the cell projection. It is found in the lamellipodium. The protein resides in the filopodium. Its subcellular location is the secreted. Its function is as follows. Stimulates the proliferation of mast cells. Able to augment the proliferation of both myeloid and lymphoid hematopoietic progenitors in bone marrow culture. Also mediates cell-cell adhesion. Acts synergistically with other cytokines, probably interleukins. This Bos taurus (Bovine) protein is Kit ligand (KITLG).